A 599-amino-acid polypeptide reads, in one-letter code: Cytochrome P450 monooxygenase ALT8 (599 aa).

2 consecutive transmembrane segments (helical) span residues 4 to 21 (LACVGAAAMACALAVYLG) and 36 to 56 (ILFGCSGLWYVWKGLLWPAYF). Asparagine 127 carries an N-linked (GlcNAc...) asparagine glycan. Over residues 495–504 (DDSSAASPSF) the composition is skewed to low complexity. Residues 495–522 (DDSSAASPSFGGSGKRKSQYTDTHKEPS) form a disordered region. Residue cysteine 539 participates in heme binding.

The protein belongs to the cytochrome P450 family. Requires heme as cofactor.

Its subcellular location is the membrane. Its pathway is secondary metabolite biosynthesis. In terms of biological role, cytochrome P450 monooxygenase; part of the gene cluster that mediates the biosynthesis of the host-selective toxins (HSTs) AAL-toxins, sphinganine-analog mycotoxins responsible for Alternaria stem canker on tomato by the tomato pathotype. The biosynthesis starts with the polyketide synthase ALT1-catalyzed C-16 carbon chain assembly from one starter acetyl-CoA unit with malonyl-CoA extender units. ALT1 also selectively transfers methyl groups at the first and the third cycle of chain elongation for AAL toxin. The C-16 polyketide chain is released from the enzyme by a nucleophilic attack of a carbanion, which is derived from R-carbon of glycin by decarboxylation, on the carbonyl carbon of polyketide acyl chain. This step is probably catalyzed by a pyridoxal 5'-phosphate-dependent aminoacyl transferase ALT4. The respective functions of the other enzymes encoded by the cluster have still to be elucidated. The sphingosine N-acyltransferase-like protein ALT7 seems not to act as a resistance/self-tolerance factor against the toxin in the toxin biosynthetic gene cluster, contrary to what is expected. The protein is Cytochrome P450 monooxygenase ALT8 of Alternaria alternata (Alternaria rot fungus).